The chain runs to 173 residues: Flavodoxin 2 (173 aa).

The Flavodoxin-like domain maps to Met3 to Leu165.

This sequence belongs to the flavodoxin family. FMN is required as a cofactor.

Its function is as follows. Low-potential electron donor to a number of redox enzymes. This chain is Flavodoxin 2 (fldB), found in Escherichia coli O157:H7.